The chain runs to 1203 residues: Serine/threonine-protein kinase Nek1 (1203 aa).

Positions 4–258 constitute a Protein kinase domain; that stretch reads YVRLQKIGEG…VNSILEKGFI (255 aa). ATP contacts are provided by residues 10-18 and lysine 33; that span reads IGEGSFGKA. Aspartate 128 acts as the Proton acceptor in catalysis. At threonine 156 the chain carries Phosphothreonine. Threonine 162 bears the Phosphothreonine; by autocatalysis mark. Residues 329–357 form a disordered region; that stretch reads LLEKKPPPKHKQAHQIPVKKMNSGEERKK. A phosphoserine mark is found at serine 417 and serine 437. Threonine 615 carries the post-translational modification Phosphothreonine. Residue serine 618 is modified to Phosphoserine. Disordered stretches follow at residues 643 to 662 and 674 to 708; these read LTDT…SSKR and AQED…ISSD. A compositionally biased stretch (basic and acidic residues) spans 674 to 683; that stretch reads AQEDEKEKQH. 4 positions are modified to phosphoserine: serine 750, serine 786, serine 820, and serine 832. Disordered stretches follow at residues 814–866 and 888–925; these read PSAT…LPPV and AVQQ…GCDV. Residues 839–850 are compositionally biased toward acidic residues; sequence NVEEPDDLETEV. The residue at position 997 (serine 997) is a Phosphoserine. 2 disordered regions span residues 1021-1045 and 1063-1120; these read SLEI…TVFE and REQP…ETTS. Serine 1071 carries the phosphoserine modification.

Belongs to the protein kinase superfamily. NEK Ser/Thr protein kinase family. NIMA subfamily. In terms of assembly, binds to CBY2. Found in a complex with CFAP410, NEK1 and SPATA7. Interacts with CFAP410. Interacts (via Ser-997 phosphorylated form) with 14-3-3 proteins. Mg(2+) is required as a cofactor. Predominantly in testes (germ cells and Sertoli cells). Lower levels in ovary (oocytes and granulosa cells), thymus and lung.

It localises to the nucleus. The protein resides in the cytoplasm. It is found in the cytoskeleton. Its subcellular location is the microtubule organizing center. The protein localises to the centrosome. The enzyme catalyses L-seryl-[protein] + ATP = O-phospho-L-seryl-[protein] + ADP + H(+). It catalyses the reaction L-threonyl-[protein] + ATP = O-phospho-L-threonyl-[protein] + ADP + H(+). Its function is as follows. Phosphorylates serines and threonines, but also appears to possess tyrosine kinase activity. Involved in DNA damage checkpoint control and for proper DNA damage repair. In response to injury that includes DNA damage, NEK1 phosphorylates VDAC1 to limit mitochondrial cell death. May be implicated in the control of meiosis. Involved in cilium assembly. This Mus musculus (Mouse) protein is Serine/threonine-protein kinase Nek1 (Nek1).